A 492-amino-acid chain; its full sequence is N-succinylglutamate 5-semialdehyde dehydrogenase (492 aa).

220–225 (GSANTG) is an NAD(+) binding site. Active-site residues include glutamate 243 and cysteine 277.

Belongs to the aldehyde dehydrogenase family. AstD subfamily.

It carries out the reaction N-succinyl-L-glutamate 5-semialdehyde + NAD(+) + H2O = N-succinyl-L-glutamate + NADH + 2 H(+). Its pathway is amino-acid degradation; L-arginine degradation via AST pathway; L-glutamate and succinate from L-arginine: step 4/5. Catalyzes the NAD-dependent reduction of succinylglutamate semialdehyde into succinylglutamate. The sequence is that of N-succinylglutamate 5-semialdehyde dehydrogenase from Escherichia coli O81 (strain ED1a).